We begin with the raw amino-acid sequence, 2035 residues long: Ral GTPase-activating protein subunit alpha-1 (2035 aa).

Disordered stretches follow at residues Leu-343–Cys-384 and Asp-477–Ser-496. The segment covering Ser-345–Gln-365 has biased composition (basic and acidic residues). Polar residues-rich tracts occupy residues Ser-366–Cys-384 and Gly-486–Ser-496. Residues Ser-710 and Ser-720 each carry the phosphoserine modification. The interval Ser-714–Lys-752 is disordered. Residue Thr-753 is modified to Phosphothreonine. Ser-772 carries the phosphoserine modification. Thr-777 carries the post-translational modification Phosphothreonine. Ser-796 is subject to Phosphoserine. Basic and acidic residues predominate over residues Glu-807–Ser-817. Disordered stretches follow at residues Glu-807 to Val-834 and Ser-848 to Asp-911. Composition is skewed to polar residues over residues Asn-824–Asn-833 and Gly-849–Gly-862. Phosphoserine occurs at positions 859, 860, and 863. Residues Ser-894–Asp-911 show a composition bias toward low complexity. Residues Ser-985, Ser-989, Ser-993, and Ser-999 each carry the phosphoserine modification. Residues Glu-986–Ser-1008 are compositionally biased toward polar residues. The interval Glu-986–His-1011 is disordered. Position 1001 is a phosphothreonine (Thr-1001). A phosphoserine mark is found at Ser-1003 and Ser-1477. The segment at Phe-1326–His-2035 is minimal domain that binds to TCF3/E12. Residues Ser-1713–Glu-1748 are a coiled coil. Positions Leu-1795–Ile-2003 constitute a Rap-GAP domain.

In terms of assembly, component of the heterodimeric RalGAP1 complex with RALGAPB. Heterodimerization is required for activity. Interacts with the HLH region of TCF3/isoform E12. In terms of tissue distribution, expressed during embryogenesis. Expressed in the adult brain, particularly in neurons of the cortex and hippocampus.

Its subcellular location is the cytoplasm. The protein localises to the nucleus. Its function is as follows. Catalytic subunit of the heterodimeric RalGAP1 complex which acts as a GTPase activator for the Ras-like small GTPases RALA and RALB. May interact with the HLH region of TCF3/isoform E12. The polypeptide is Ral GTPase-activating protein subunit alpha-1 (Ralgapa1) (Mus musculus (Mouse)).